A 439-amino-acid polypeptide reads, in one-letter code: Serine/threonine-protein kinase 2 (439 aa).

A Protein kinase domain is found at 87–439 (NDDFYHISTG…IFSDWINGGN (353 aa)). Residues 93 to 101 (ISTGGYGIV) and Lys-117 contribute to the ATP site. Asp-307 serves as the catalytic Proton acceptor.

The protein belongs to the protein kinase superfamily. Ser/Thr protein kinase family. Poxviruses subfamily. Post-translationally, phosphorylated in vivo. Autophosphorylated in vitro.

Its subcellular location is the host endoplasmic reticulum. The protein resides in the host endoplasmic reticulum-Golgi intermediate compartment. The catalysed reaction is L-seryl-[protein] + ATP = O-phospho-L-seryl-[protein] + ADP + H(+). The enzyme catalyses L-threonyl-[protein] + ATP = O-phospho-L-threonyl-[protein] + ADP + H(+). Functionally, essential serine-protein kinase involved in the early stage of virion morphogenesis. In Vaccinia virus (strain Ankara) (VACV), this protein is Serine/threonine-protein kinase 2 (OPG054).